Here is a 182-residue protein sequence, read N- to C-terminus: Transcription termination/antitermination protein NusG (182 aa).

This sequence belongs to the NusG family.

In terms of biological role, participates in transcription elongation, termination and antitermination. This Chlamydia muridarum (strain MoPn / Nigg) protein is Transcription termination/antitermination protein NusG.